The primary structure comprises 96 residues: Aspartyl/glutamyl-tRNA(Asn/Gln) amidotransferase subunit C (96 aa).

The protein belongs to the GatC family. Heterotrimer of A, B and C subunits.

The enzyme catalyses L-glutamyl-tRNA(Gln) + L-glutamine + ATP + H2O = L-glutaminyl-tRNA(Gln) + L-glutamate + ADP + phosphate + H(+). The catalysed reaction is L-aspartyl-tRNA(Asn) + L-glutamine + ATP + H2O = L-asparaginyl-tRNA(Asn) + L-glutamate + ADP + phosphate + 2 H(+). Allows the formation of correctly charged Asn-tRNA(Asn) or Gln-tRNA(Gln) through the transamidation of misacylated Asp-tRNA(Asn) or Glu-tRNA(Gln) in organisms which lack either or both of asparaginyl-tRNA or glutaminyl-tRNA synthetases. The reaction takes place in the presence of glutamine and ATP through an activated phospho-Asp-tRNA(Asn) or phospho-Glu-tRNA(Gln). The protein is Aspartyl/glutamyl-tRNA(Asn/Gln) amidotransferase subunit C of Trichormus variabilis (strain ATCC 29413 / PCC 7937) (Anabaena variabilis).